The chain runs to 371 residues: Histidinol-phosphate aminotransferase (371 aa).

Residue Lys-222 is modified to N6-(pyridoxal phosphate)lysine.

This sequence belongs to the class-II pyridoxal-phosphate-dependent aminotransferase family. Histidinol-phosphate aminotransferase subfamily. Homodimer. Pyridoxal 5'-phosphate serves as cofactor.

The catalysed reaction is L-histidinol phosphate + 2-oxoglutarate = 3-(imidazol-4-yl)-2-oxopropyl phosphate + L-glutamate. Its pathway is amino-acid biosynthesis; L-histidine biosynthesis; L-histidine from 5-phospho-alpha-D-ribose 1-diphosphate: step 7/9. This chain is Histidinol-phosphate aminotransferase, found in Anoxybacillus flavithermus (strain DSM 21510 / WK1).